Consider the following 150-residue polypeptide: D-aminoacyl-tRNA deacylase (150 aa).

A Gly-cisPro motif, important for rejection of L-amino acids motif is present at residues G137–P138.

It belongs to the DTD family. As to quaternary structure, homodimer.

The protein localises to the cytoplasm. The enzyme catalyses glycyl-tRNA(Ala) + H2O = tRNA(Ala) + glycine + H(+). The catalysed reaction is a D-aminoacyl-tRNA + H2O = a tRNA + a D-alpha-amino acid + H(+). Functionally, an aminoacyl-tRNA editing enzyme that deacylates mischarged D-aminoacyl-tRNAs. Also deacylates mischarged glycyl-tRNA(Ala), protecting cells against glycine mischarging by AlaRS. Acts via tRNA-based rather than protein-based catalysis; rejects L-amino acids rather than detecting D-amino acids in the active site. By recycling D-aminoacyl-tRNA to D-amino acids and free tRNA molecules, this enzyme counteracts the toxicity associated with the formation of D-aminoacyl-tRNA entities in vivo and helps enforce protein L-homochirality. The chain is D-aminoacyl-tRNA deacylase from Heliobacterium modesticaldum (strain ATCC 51547 / Ice1).